Here is a 571-residue protein sequence, read N- to C-terminus: Phosphoenolpyruvate-protein phosphotransferase (571 aa).

The active-site Tele-phosphohistidine intermediate is H189. 2 residues coordinate phosphoenolpyruvate: R296 and R332. Mg(2+) contacts are provided by E431 and D455. Phosphoenolpyruvate-binding positions include 454–455 (ND) and R465. The active-site Proton donor is C502.

The protein belongs to the PEP-utilizing enzyme family. Homodimer. The cofactor is Mg(2+).

The protein localises to the cytoplasm. It carries out the reaction L-histidyl-[protein] + phosphoenolpyruvate = N(pros)-phospho-L-histidyl-[protein] + pyruvate. In terms of biological role, general (non sugar-specific) component of the phosphoenolpyruvate-dependent sugar phosphotransferase system (sugar PTS). This major carbohydrate active-transport system catalyzes the phosphorylation of incoming sugar substrates concomitantly with their translocation across the cell membrane. Enzyme I transfers the phosphoryl group from phosphoenolpyruvate (PEP) to the phosphoryl carrier protein (HPr). In Buchnera aphidicola subsp. Acyrthosiphon pisum (strain APS) (Acyrthosiphon pisum symbiotic bacterium), this protein is Phosphoenolpyruvate-protein phosphotransferase (ptsI).